The chain runs to 569 residues: Mitogen-activated protein kinase 7 (569 aa).

The Protein kinase domain occupies 13–304 (YKIQEIVGKG…AEEALADPYF (292 aa)). Residues 19–27 (VGKGSYGVV) and Lys-42 contribute to the ATP site. Asp-139 acts as the Proton acceptor in catalysis. Thr-175 carries the post-translational modification Phosphothreonine. The short motif at 175–177 (TDY) is the TXY element. Residue Tyr-177 is modified to Phosphotyrosine. The segment at 401–420 (TTVHSTSIPPNEGLDATSQV) is disordered.

The protein belongs to the protein kinase superfamily. CMGC Ser/Thr protein kinase family. MAP kinase subfamily. In terms of processing, dually phosphorylated on Thr-175 and Tyr-177, which activates the enzyme.

The enzyme catalyses L-seryl-[protein] + ATP = O-phospho-L-seryl-[protein] + ADP + H(+). It catalyses the reaction L-threonyl-[protein] + ATP = O-phospho-L-threonyl-[protein] + ADP + H(+). Activated by threonine and tyrosine phosphorylation. This chain is Mitogen-activated protein kinase 7 (MPK7), found in Oryza sativa subsp. japonica (Rice).